The sequence spans 429 residues: Gamma-glutamyl phosphate reductase (429 aa).

It belongs to the gamma-glutamyl phosphate reductase family.

The protein localises to the cytoplasm. The enzyme catalyses L-glutamate 5-semialdehyde + phosphate + NADP(+) = L-glutamyl 5-phosphate + NADPH + H(+). It participates in amino-acid biosynthesis; L-proline biosynthesis; L-glutamate 5-semialdehyde from L-glutamate: step 2/2. In terms of biological role, catalyzes the NADPH-dependent reduction of L-glutamate 5-phosphate into L-glutamate 5-semialdehyde and phosphate. The product spontaneously undergoes cyclization to form 1-pyrroline-5-carboxylate. The chain is Gamma-glutamyl phosphate reductase from Bradyrhizobium sp. (strain ORS 278).